We begin with the raw amino-acid sequence, 421 residues long: MDKIVIKGGNKLTGEVKVEGAKNAVLPILTASLLASDKPSKLVNVPALSDVETINNVLTTLNADVTYKKDENAVVVDATKTLNEEAPYEYVSKMRASILVMGPLLARLGHAIVALPGGCAIGSRPIEQHIKGFEALGAEIHLENGNIYANAKDGLKGTSIHLDFPSVGATQNIIMAASLAKGKTLIENAAKEPEIVDLANYINEMGGRITGAGTDTITINGVESLHGVEHAIIPDRIEAGTLLIAGAITRGDIFVRGAIKEHMASLVYKLEEMGVELDYQEDGIRVRAEGDLQPVDIKTLPHPGFPTDMQSQMMALLLTANGHKVVTETVFENRFMHVAEFKRMNANINVEGRSAKLEGKSQLQGAQVKATDLRAAAALILAGLVADGKTSVTELNHLDRGYVDLHGKLKQLGAEIERIND.

22–23 (KN) serves as a coordination point for phosphoenolpyruvate. Arginine 95 lines the UDP-N-acetyl-alpha-D-glucosamine pocket. Residue cysteine 119 is the Proton donor of the active site. Cysteine 119 bears the 2-(S-cysteinyl)pyruvic acid O-phosphothioketal mark. UDP-N-acetyl-alpha-D-glucosamine is bound by residues 124 to 128 (RPIEQ), aspartate 308, and valine 330.

The protein belongs to the EPSP synthase family. MurA subfamily.

The protein resides in the cytoplasm. It catalyses the reaction phosphoenolpyruvate + UDP-N-acetyl-alpha-D-glucosamine = UDP-N-acetyl-3-O-(1-carboxyvinyl)-alpha-D-glucosamine + phosphate. The protein operates within cell wall biogenesis; peptidoglycan biosynthesis. Functionally, cell wall formation. Adds enolpyruvyl to UDP-N-acetylglucosamine. The sequence is that of UDP-N-acetylglucosamine 1-carboxyvinyltransferase 1 from Staphylococcus aureus (strain bovine RF122 / ET3-1).